We begin with the raw amino-acid sequence, 543 residues long: Cytochrome P450 monooxygenase CYP1 (543 aa).

Residues 40–60 (SSFFTRILIAFIGLCLLSIFS) form a helical membrane-spanning segment. Residues Asn210 and Asn367 are each glycosylated (N-linked (GlcNAc...) asparagine). Cys478 provides a ligand contact to heme. Asn517 is a glycosylation site (N-linked (GlcNAc...) asparagine).

The protein belongs to the cytochrome P450 family. It depends on heme as a cofactor.

Its subcellular location is the membrane. The protein operates within secondary metabolite biosynthesis. Functionally, cytochrome P450 monooxygenase; part of the gene cluster that mediates the biosynthesis of a tyrosine-derived cytochalasan acting as a fungal signal recognized by resistant rice plants and leads to avirulence in Pi33 resistant rice cultivars. The first step in the pathway is catalyzed by the hybrid PKS-NRPS ACE1, assisted by the enoyl reductase RAP1, that are responsible for fusion of the tyrosine precursor and the polyketide backbone. The polyketide synthase module (PKS) of ACE1 is responsible for the synthesis of the polyketide backbone and the downstream nonribosomal peptide synthetase (NRPS) amidates the carboxyl end of the polyketide with the tyrosine precursor. Because ACE1 lacks a designated enoylreductase (ER) domain, the required activity is provided the enoyl reductase RAP1. Reduction by the hydrolyase ORFZ, followed by dehydration and intra-molecular Diels-Alder cyclization by the Diels-Alderase ORF3 then yield the required isoindolone-fused macrocycle. A number of oxidative steps catalyzed by the tailoring enzymes identified within the cluster, including cytochrome P450 monooxygenases CYP1 to CYP4, the FAD-linked oxidoreductase OXR2 and the short-chain dehydrogenase/reductase OXR1, are further required to afford the final cytochalasans that confer avirulence and which have still to be identified. The monooxygenase CYP1 has been shown to be a site-selective C-18 hydroxylase whereas the function of CYP3 is the site-selective epoxidation of the C-6/C-7 olefin that is present in some intermediate compounds. Finally, SYN2 and RAP2 are not required for avirulence in Pi33 resistant rice cultivars. The polypeptide is Cytochrome P450 monooxygenase CYP1 (Pyricularia oryzae (strain 70-15 / ATCC MYA-4617 / FGSC 8958) (Rice blast fungus)).